The following is a 215-amino-acid chain: Large ribosomal subunit protein uL1 (215 aa).

It belongs to the universal ribosomal protein uL1 family. Part of the 50S ribosomal subunit.

Its function is as follows. Binds directly to 23S rRNA. Probably involved in E site tRNA release. Protein L1 is also a translational repressor protein, it controls the translation of its operon by binding to its mRNA. This is Large ribosomal subunit protein uL1 from Cenarchaeum symbiosum (strain A).